An 88-amino-acid polypeptide reads, in one-letter code: MNDNNERKPLRTIKGLVISNKMQKTVTVLVERQIKHALYGKYIKRSTKLHAHDADDLCNEGDVVLMTEVAPISKTKNWRVVEIVARSD.

Belongs to the universal ribosomal protein uS17 family. In terms of assembly, part of the 30S ribosomal subunit.

Functionally, one of the primary rRNA binding proteins, it binds specifically to the 5'-end of 16S ribosomal RNA. This chain is Small ribosomal subunit protein uS17, found in Xylella fastidiosa (strain M23).